Reading from the N-terminus, the 292-residue chain is Nitrogenase iron protein (292 aa).

Glycine 10–serine 17 provides a ligand contact to ATP. Cysteine 98 serves as a coordination point for [4Fe-4S] cluster. Residue arginine 101 is modified to ADP-ribosylarginine; by dinitrogenase reductase ADP-ribosyltransferase. Cysteine 133 is a binding site for [4Fe-4S] cluster.

Belongs to the NifH/BchL/ChlL family. Homodimer. The cofactor is [4Fe-4S] cluster. The reversible ADP-ribosylation of Arg-101 inactivates the nitrogenase reductase and regulates nitrogenase activity.

It catalyses the reaction N2 + 8 reduced [2Fe-2S]-[ferredoxin] + 16 ATP + 16 H2O = H2 + 8 oxidized [2Fe-2S]-[ferredoxin] + 2 NH4(+) + 16 ADP + 16 phosphate + 6 H(+). Its function is as follows. The key enzymatic reactions in nitrogen fixation are catalyzed by the nitrogenase complex, which has 2 components: the iron protein and the molybdenum-iron protein. This Teredinibacter turnerae (strain ATCC 39867 / T7901) protein is Nitrogenase iron protein.